Reading from the N-terminus, the 510-residue chain is Ribonuclease Y (510 aa).

Residues 2–22 (IYIIFSSIFAGFILGFLVRVF) form a helical membrane-spanning segment. Residues 198–258 (TVASVELPND…IRKELAKRTL (61 aa)) enclose the KH domain. The HD domain maps to 324–419 (VLSHSKETAI…VQIADAISAS (96 aa)).

This sequence belongs to the RNase Y family.

It is found in the cell membrane. Its function is as follows. Endoribonuclease that initiates mRNA decay. The sequence is that of Ribonuclease Y from Borreliella burgdorferi (strain ATCC 35210 / DSM 4680 / CIP 102532 / B31) (Borrelia burgdorferi).